The chain runs to 360 residues: Tryptophan--tRNA ligase, mitochondrial (360 aa).

Residues Q38 and 44-47 (HLGN) contribute to the ATP site. The 'HIGH' region motif lies at 39–47 (PTGIPHLGN). D168 provides a ligand contact to L-tryptophan. Residues 180–182 (GED) and 229–233 (KMSKS) each bind ATP. Over residues 220–230 (IRSLREPEKKM) the composition is skewed to basic and acidic residues. The tract at residues 220-241 (IRSLREPEKKMSKSSGGPRSRI) is disordered. Positions 229–233 (KMSKS) match the 'KMSKS' region motif.

It belongs to the class-I aminoacyl-tRNA synthetase family.

It is found in the mitochondrion matrix. It carries out the reaction tRNA(Trp) + L-tryptophan + ATP = L-tryptophyl-tRNA(Trp) + AMP + diphosphate + H(+). Functionally, catalyzes the attachment of tryptophan to tRNA(Trp). The chain is Tryptophan--tRNA ligase, mitochondrial from Caenorhabditis elegans.